The sequence spans 330 residues: NADH-quinone oxidoreductase subunit H (330 aa).

Transmembrane regions (helical) follow at residues 5-25 (LFFIIETFIKAVVILAVIACL), 44-64 (IGPDMVGPVGVLQIVADMIKL), 78-98 (FIFLIAPLISAIAAFAALAPI), 122-142 (VLYVMGVASVCVFSPLMAGLA), 156-176 (VMGLISFEVVSGLALLSVIMI), 192-212 (IFGWFVFKQPLAFVLFLMASF), 240-260 (MRWAMFFIGEYANMIASSIVI), 271-293 (FWFVPGGLMMIFKASCVFFFFLW), and 310-330 (CWKILLPLALVNVLITGIALI).

The protein belongs to the complex I subunit 1 family. As to quaternary structure, NDH-1 is composed of 14 different subunits. Subunits NuoA, H, J, K, L, M, N constitute the membrane sector of the complex.

It localises to the cell inner membrane. It catalyses the reaction a quinone + NADH + 5 H(+)(in) = a quinol + NAD(+) + 4 H(+)(out). Its function is as follows. NDH-1 shuttles electrons from NADH, via FMN and iron-sulfur (Fe-S) centers, to quinones in the respiratory chain. The immediate electron acceptor for the enzyme in this species is believed to be ubiquinone. Couples the redox reaction to proton translocation (for every two electrons transferred, four hydrogen ions are translocated across the cytoplasmic membrane), and thus conserves the redox energy in a proton gradient. This subunit may bind ubiquinone. The protein is NADH-quinone oxidoreductase subunit H of Campylobacter curvus (strain 525.92).